The primary structure comprises 118 residues: Small ribosomal subunit protein uS13 (118 aa).

Residues 92–118 (RRGHPLRGQRTRTNARTRKGPRKAIRK) form a disordered region.

Belongs to the universal ribosomal protein uS13 family. In terms of assembly, part of the 30S ribosomal subunit. Forms a loose heterodimer with protein S19. Forms two bridges to the 50S subunit in the 70S ribosome.

In terms of biological role, located at the top of the head of the 30S subunit, it contacts several helices of the 16S rRNA. In the 70S ribosome it contacts the 23S rRNA (bridge B1a) and protein L5 of the 50S subunit (bridge B1b), connecting the 2 subunits; these bridges are implicated in subunit movement. Contacts the tRNAs in the A and P-sites. This chain is Small ribosomal subunit protein uS13, found in Xanthomonas campestris pv. campestris (strain ATCC 33913 / DSM 3586 / NCPPB 528 / LMG 568 / P 25).